Consider the following 484-residue polypeptide: UDP-N-acetylmuramoyl-L-alanyl-D-glutamate--2,6-diaminopimelate ligase (484 aa).

Ser-30 is a binding site for UDP-N-acetyl-alpha-D-muramoyl-L-alanyl-D-glutamate. 111-117 (GTNGKTT) serves as a coordination point for ATP. UDP-N-acetyl-alpha-D-muramoyl-L-alanyl-D-glutamate-binding positions include 153–154 (TT), Ser-180, Gln-186, and Arg-188. Position 220 is an N6-carboxylysine (Lys-220). Meso-2,6-diaminopimelate contacts are provided by residues Arg-378, 402–405 (DNPR), Gly-455, and Glu-459. Positions 402 to 405 (DNPR) match the Meso-diaminopimelate recognition motif motif.

This sequence belongs to the MurCDEF family. MurE subfamily. It depends on Mg(2+) as a cofactor. Post-translationally, carboxylation is probably crucial for Mg(2+) binding and, consequently, for the gamma-phosphate positioning of ATP.

The protein resides in the cytoplasm. The enzyme catalyses UDP-N-acetyl-alpha-D-muramoyl-L-alanyl-D-glutamate + meso-2,6-diaminopimelate + ATP = UDP-N-acetyl-alpha-D-muramoyl-L-alanyl-gamma-D-glutamyl-meso-2,6-diaminopimelate + ADP + phosphate + H(+). Its pathway is cell wall biogenesis; peptidoglycan biosynthesis. Catalyzes the addition of meso-diaminopimelic acid to the nucleotide precursor UDP-N-acetylmuramoyl-L-alanyl-D-glutamate (UMAG) in the biosynthesis of bacterial cell-wall peptidoglycan. This Phocaeicola vulgatus (strain ATCC 8482 / DSM 1447 / JCM 5826 / CCUG 4940 / NBRC 14291 / NCTC 11154) (Bacteroides vulgatus) protein is UDP-N-acetylmuramoyl-L-alanyl-D-glutamate--2,6-diaminopimelate ligase.